The chain runs to 323 residues: o-succinylbenzoate synthase (323 aa).

The active-site Proton donor is K134. 3 residues coordinate Mg(2+): D162, E191, and D214. The active-site Proton acceptor is K236.

Belongs to the mandelate racemase/muconate lactonizing enzyme family. MenC type 1 subfamily. Requires a divalent metal cation as cofactor.

The enzyme catalyses (1R,6R)-6-hydroxy-2-succinyl-cyclohexa-2,4-diene-1-carboxylate = 2-succinylbenzoate + H2O. The protein operates within quinol/quinone metabolism; 1,4-dihydroxy-2-naphthoate biosynthesis; 1,4-dihydroxy-2-naphthoate from chorismate: step 4/7. It participates in quinol/quinone metabolism; menaquinone biosynthesis. Its function is as follows. Converts 2-succinyl-6-hydroxy-2,4-cyclohexadiene-1-carboxylate (SHCHC) to 2-succinylbenzoate (OSB). The polypeptide is o-succinylbenzoate synthase (Yersinia pestis bv. Antiqua (strain Antiqua)).